A 102-amino-acid polypeptide reads, in one-letter code: Large ribosomal subunit protein bL21 (102 aa).

The protein belongs to the bacterial ribosomal protein bL21 family. As to quaternary structure, part of the 50S ribosomal subunit. Contacts protein L20.

This protein binds to 23S rRNA in the presence of protein L20. The protein is Large ribosomal subunit protein bL21 of Geobacter sp. (strain M21).